The sequence spans 928 residues: Putative replication origin binding protein (928 aa).

One can recognise a Helicase ATP-binding domain in the interval 386–516 (NIVPPKGHIT…QVLRDILMTA (131 aa)). 399–406 (ASLGTGKT) is an ATP binding site. Positions 484 to 487 (DECD) match the DEAD box motif.

Belongs to the herpesviridae oribp family.

Functionally, displays bipolar ssDNA and dsDNA unwinding activities that require the same core catalytic residues for unwinding in either direction, the 3'-5' direction being more robust. The protein is Putative replication origin binding protein of Escherichia coli (Enterobacteria phage T5).